Consider the following 145-residue polypeptide: D-aminoacyl-tRNA deacylase (145 aa).

Residues 137-138 (GP) carry the Gly-cisPro motif, important for rejection of L-amino acids motif.

Belongs to the DTD family. As to quaternary structure, homodimer.

The protein resides in the cytoplasm. The enzyme catalyses glycyl-tRNA(Ala) + H2O = tRNA(Ala) + glycine + H(+). It catalyses the reaction a D-aminoacyl-tRNA + H2O = a tRNA + a D-alpha-amino acid + H(+). In terms of biological role, an aminoacyl-tRNA editing enzyme that deacylates mischarged D-aminoacyl-tRNAs. Also deacylates mischarged glycyl-tRNA(Ala), protecting cells against glycine mischarging by AlaRS. Acts via tRNA-based rather than protein-based catalysis; rejects L-amino acids rather than detecting D-amino acids in the active site. By recycling D-aminoacyl-tRNA to D-amino acids and free tRNA molecules, this enzyme counteracts the toxicity associated with the formation of D-aminoacyl-tRNA entities in vivo and helps enforce protein L-homochirality. The sequence is that of D-aminoacyl-tRNA deacylase from Azotobacter vinelandii (strain DJ / ATCC BAA-1303).